Consider the following 174-residue polypeptide: Large ribosomal subunit protein uL10 (174 aa).

The protein belongs to the universal ribosomal protein uL10 family. Part of the ribosomal stalk of the 50S ribosomal subunit. The N-terminus interacts with L11 and the large rRNA to form the base of the stalk. The C-terminus forms an elongated spine to which L12 dimers bind in a sequential fashion forming a multimeric L10(L12)X complex.

Forms part of the ribosomal stalk, playing a central role in the interaction of the ribosome with GTP-bound translation factors. This Coxiella burnetii (strain CbuK_Q154) (Coxiella burnetii (strain Q154)) protein is Large ribosomal subunit protein uL10.